Here is a 361-residue protein sequence, read N- to C-terminus: Transcription factor MafA (361 aa).

Position 14 is a phosphoserine (serine 14). Lysine 32 participates in a covalent cross-link: Glycyl lysine isopeptide (Lys-Gly) (interchain with G-Cter in SUMO2). 2 disordered regions span residues 40-105 (RFCH…VGGA) and 175-228 (GGAD…AGHH). Residues 46–76 (PPGSLSSTPLSTPCSSVPSSPSFCAPSPGTG) are compositionally biased toward low complexity. Position 49 is a phosphoserine (serine 49). A phosphothreonine mark is found at threonine 53 and threonine 57. Phosphoserine occurs at positions 61 and 65. Residues 183 to 211 (GHHHGAHHTAHHHHSAHHHHHHHHHHGGS) are compositionally biased toward basic residues. Residues 212-226 (GHHGGGAGHGGGGAG) show a composition bias toward gly residues. The segment at 262–287 (RLKQKRRTLKNRGYAQSCRFKRVQQR) is basic motif. A bZIP domain is found at 262–325 (RLKQKRRTLK…DLYKEKYEKL (64 aa)). A leucine-zipper region spans residues 290–311 (LESEKCQLQSQVEQLKLEVGRL). The interval 324 to 361 (KLAGRGGPGGAGGAGFPREPSPAQAGPGAAKGAPDFFL) is disordered. Gly residues predominate over residues 327 to 338 (GRGGPGGAGGAG). The span at 345–361 (PAQAGPGAAKGAPDFFL) shows a compositional bias: low complexity.

Belongs to the bZIP family. Forms homodimers. Monomers and dimers are able to bind DNA, but the off-rate is faster for monomers. Interacts with NEUROD1 and PDX1. May interact with MAFB, FOS, JUN and PCAF. Post-translationally, ubiquitinated, leading to its degradation by the proteasome. Phosphorylated at tyrosines.

Its subcellular location is the nucleus. In terms of biological role, transcription factor that activates insulin gene expression. Acts synergistically with NEUROD1/BETA2 and PDX1. Binds the insulin enhancer C1/RIPE3b element. Binds to consensus TRE-type MARE 5'-TGCTGACTCAGCA-3' DNA sequence. The sequence is that of Transcription factor MafA (Mafa) from Rattus norvegicus (Rat).